We begin with the raw amino-acid sequence, 179 residues long: Transcription factor 21 (179 aa).

Positions 23–87 are disordered; the sequence is IKLDPNKEFG…QVQRNAANAR (65 aa). A compositionally biased stretch (polar residues) spans 34–46; it reads SNDSNEESSTCDN. Residues 50-64 are compositionally biased toward basic residues; that stretch reads KKGRGTSGKRRKAPS. Positions 70-80 are enriched in polar residues; that stretch reads GNINQEGKQVQ. The bHLH domain maps to 79 to 131; that stretch reads VQRNAANARERARMRVLSKAFSRLKTTLPWVPPDTKLSKLDTLRLASSYIAHL.

Efficient DNA binding requires dimerization with another bHLH protein.

The protein localises to the nucleus. Functionally, involved in epithelial-mesenchymal interactions in kidney and lung morphogenesis that include epithelial differentiation and branching morphogenesis. This chain is Transcription factor 21 (tcf21), found in Xenopus tropicalis (Western clawed frog).